A 276-amino-acid polypeptide reads, in one-letter code: Undecaprenyl-diphosphatase (276 aa).

A run of 8 helical transmembrane segments spans residues 6 to 26, 49 to 69, 89 to 109, 117 to 137, 151 to 171, 181 to 201, 224 to 244, and 256 to 276; these read IEIL…WLPI, EMFF…MFWN, FSLW…GILF, LHTP…FIVI, LADI…LSLI, IIGA…TFFL, AELL…VFVI, and FKVF…ITAI.

Belongs to the UppP family.

Its subcellular location is the cell membrane. The catalysed reaction is di-trans,octa-cis-undecaprenyl diphosphate + H2O = di-trans,octa-cis-undecaprenyl phosphate + phosphate + H(+). Catalyzes the dephosphorylation of undecaprenyl diphosphate (UPP). Confers resistance to bacitracin. In Enterococcus faecalis (Streptococcus faecalis), this protein is Undecaprenyl-diphosphatase.